A 290-amino-acid polypeptide reads, in one-letter code: 33 kDa chaperonin (290 aa).

2 cysteine pairs are disulfide-bonded: Cys-235/Cys-237 and Cys-268/Cys-271.

This sequence belongs to the HSP33 family. In terms of processing, under oxidizing conditions two disulfide bonds are formed involving the reactive cysteines. Under reducing conditions zinc is bound to the reactive cysteines and the protein is inactive.

Its subcellular location is the cytoplasm. In terms of biological role, redox regulated molecular chaperone. Protects both thermally unfolding and oxidatively damaged proteins from irreversible aggregation. Plays an important role in the bacterial defense system toward oxidative stress. The chain is 33 kDa chaperonin from Streptococcus pyogenes serotype M49.